The primary structure comprises 74 residues: Protein WFDC9 (74 aa).

Positions 1 to 19 (MKFWILLLTVSAHGIVVFL) are cleaved as a signal peptide.

The protein resides in the secreted. The chain is Protein WFDC9 (Wfdc9) from Rattus norvegicus (Rat).